A 405-amino-acid chain; its full sequence is Aspartic protease (405 aa).

A signal peptide spans 1-21 (MISDTVIAILAVALVGSTVQA). A propeptide spans 22–81 (APVDATATSTSGIIAVPISKSAAQLAREADPVVSLDWLKKTKAQAQYKHKQANARLHSKR) (removed in mature form). The 306-residue stretch at 97 to 402 (WTGPITIGGQ…DVGNARVGFA (306 aa)) folds into the Peptidase A1 domain. The active site involves aspartate 113. A disulfide bridge links cysteine 126 with cysteine 131. Aspartate 290 is a catalytic residue. Cysteine 332 and cysteine 366 form a disulfide bridge.

The protein belongs to the peptidase A1 family.

It localises to the secreted. Its activity is regulated as follows. Inhibited by pepstatin A. Functionally, possesses acidic protease activity. Hydrolyzes casein and azoalbumin in vitro. This is Aspartic protease from Phaffia rhodozyma (Yeast).